The primary structure comprises 420 residues: UDP-N-acetylglucosamine 1-carboxyvinyltransferase (420 aa).

22–23 contributes to the phosphoenolpyruvate binding site; the sequence is KN. Residue Arg-94 coordinates UDP-N-acetyl-alpha-D-glucosamine. Residue Cys-118 is the Proton donor of the active site. Cys-118 bears the 2-(S-cysteinyl)pyruvic acid O-phosphothioketal mark. Residues Asp-307 and Ile-329 each coordinate UDP-N-acetyl-alpha-D-glucosamine.

Belongs to the EPSP synthase family. MurA subfamily.

It is found in the cytoplasm. The enzyme catalyses phosphoenolpyruvate + UDP-N-acetyl-alpha-D-glucosamine = UDP-N-acetyl-3-O-(1-carboxyvinyl)-alpha-D-glucosamine + phosphate. It participates in cell wall biogenesis; peptidoglycan biosynthesis. Cell wall formation. Adds enolpyruvyl to UDP-N-acetylglucosamine. The sequence is that of UDP-N-acetylglucosamine 1-carboxyvinyltransferase from Granulibacter bethesdensis (strain ATCC BAA-1260 / CGDNIH1).